Reading from the N-terminus, the 586-residue chain is Cryptochrome-1 (586 aa).

Residues 3 to 132 (VNAVHWFRKG…EVIVRISHTL (130 aa)) form the Photolyase/cryptochrome alpha/beta domain. A Glycyl lysine isopeptide (Lys-Gly) (interchain with G-Cter in ubiquitin) cross-link involves residue K11. Residues 50–54 (NRWRF) carry the LIR 1 motif. S71 carries the phosphoserine; by AMPK modification. Positions 82 to 87 (DVFPRL) match the LIR 2 motif. K107 participates in a covalent cross-link: Glycyl lysine isopeptide (Lys-Gly) (interchain with G-Cter in ubiquitin). Residues 151–156 (KRFQTL) carry the LIR 3 motif. Residue K159 forms a Glycyl lysine isopeptide (Lys-Gly) (interchain with G-Cter in ubiquitin) linkage. Phosphoserine; by MAPK is present on S247. FAD is bound at residue S252. 2 consecutive short sequence motifs (LIR) follow at residues 255 to 260 (LRFGCL) and 271 to 276 (DLYKKV). At S280 the chain carries Phosphoserine; by AMPK. The short motif at 285-290 (SLYGQL) is the LIR 6 element. Q289 provides a ligand contact to FAD. A Glycyl lysine isopeptide (Lys-Gly) (interchain with G-Cter in ubiquitin) cross-link involves residue K329. The LIR 7 signature appears at 335–339 (TGFPW). FAD is bound at residue H355. The tract at residues 371–470 (WISWEEGMKV…LIGINYPKPM (100 aa)) is required for inhibition of CLOCK-BMAL1-mediated transcription. Residues 379–384 (KVFEEL) carry the LIR 8 motif. FAD is bound at residue 387–389 (DAD). 3 consecutive short sequence motifs (LIR) follow at residues 395–400 (GSWMWL), 411–416 (HCYCPV), and 430–435 (RRYLPV). The segment at 471-493 (VNHAEASRLNIERMKQIYQQLSR) is interaction with TIMELESS. K485 is covalently cross-linked (Glycyl lysine isopeptide (Lys-Gly) (interchain with G-Cter in ubiquitin)). Short sequence motifs (LIR) lie at residues 486–491 (QIYQQL) and 492–497 (SRYRGL). Residues 545–559 (QQTHLLKQGRSSMGT) show a composition bias toward polar residues. The interval 545-586 (QQTHLLKQGRSSMGTGLSGGKRPSQEEDTQSIGPKVQRQSTN) is disordered. K565 participates in a covalent cross-link: Glycyl lysine isopeptide (Lys-Gly) (interchain with G-Cter in ubiquitin). Residue S568 is modified to Phosphoserine.

This sequence belongs to the DNA photolyase class-1 family. Component of the circadian core oscillator, which includes the CRY proteins, CLOCK or NPAS2, BMAL1 or BMAL2, CSNK1D and/or CSNK1E, TIMELESS, and the PER proteins. Interacts directly with TIMELESS. Interacts directly with PER1, PER2 and PER3; interaction with PER2 inhibits its ubiquitination and vice versa. Interacts with FBXL21. Interacts with FBXL3. Interacts with CLOCK-BMAL1 independently of PER2 and DNA. Interacts with HDAC1, HDAC2 and SIN3B. Interacts with nuclear receptors AR, NR1D1, NR3C1/GR, RORA and RORC; the interaction with at least NR3C1/GR is ligand dependent. Interacts with PRKDC. Interacts with the G protein subunit alpha GNAS; the interaction may block GPCR-mediated regulation of cAMP concentrations. Interacts with PRMT5. Interacts with EZH2. Interacts with MYBBP1A, DOCK7, HNRNPU, RPL7A, RPL8 and RPS3. Interacts with PPP5C (via TPR repeats). Interacts with MAP1LC3B. Interacts with CLOCK. Interacts with BMAL1. Interacts weakly with HDAC3; this interaction is enhanced in the presence of FBXL3. Interacts with TRIM28, KCTD5 and DDB1. Interacts with FOXO1. Interacts with DTL and DDB1-CUL4A complex. Interacts with HNF4A. Interacts with PSMD2 in a KDM8-dependent manner. Interacts with KDM8 in a FBXL3-dependent manner. Interacts with PPARG in a ligand-dependent manner. Interacts with PPARD (via domain NR LBD) and NR1I2 (via domain NR LBD) in a ligand-dependent manner. Interacts with PPARA, NR1I3 and VDR. FAD serves as cofactor. The cofactor is (6R)-5,10-methylene-5,6,7,8-tetrahydrofolate. Phosphorylation on Ser-247 by MAPK is important for the inhibition of CLOCK-BMAL1-mediated transcriptional activity. Phosphorylation by CSNK1E requires interaction with PER1 or PER2. Phosphorylation at Ser-71 and Ser-280 by AMPK decreases protein stability. Phosphorylation at Ser-568 exhibits a robust circadian rhythm with a peak at CT8, increases protein stability, prevents SCF(FBXL3)-mediated degradation and is antagonized by interaction with PRKDC. Post-translationally, ubiquitinated by the SCF(FBXL3) and SCF(FBXL21) complexes, regulating the balance between degradation and stabilization. The SCF(FBXL3) complex is mainly nuclear and mediates ubiquitination and subsequent degradation of CRY1. In contrast, cytoplasmic SCF(FBXL21) complex-mediated ubiquitination leads to stabilize CRY1 and counteract the activity of the SCF(FBXL3) complex. The SCF(FBXL3) and SCF(FBXL21) complexes probably mediate ubiquitination at different Lys residues. Ubiquitination at Lys-11 and Lys-107 are specifically ubiquitinated by the SCF(FBXL21) complex but not by the SCF(FBXL3) complex. Ubiquitination may be inhibited by PER2. Deubiquitinated by USP7. In terms of processing, undergoes autophagy-mediated degradation in the liver in a time-dependent manner. Autophagic degradation of CRY1 (an inhibitor of gluconeogenesis) occurs during periods of reduced feeding allowing induction of gluconeogenesis and maintenance of blood glucose levels.

It localises to the cytoplasm. Its subcellular location is the nucleus. Transcriptional repressor which forms a core component of the circadian clock. The circadian clock, an internal time-keeping system, regulates various physiological processes through the generation of approximately 24 hour circadian rhythms in gene expression, which are translated into rhythms in metabolism and behavior. It is derived from the Latin roots 'circa' (about) and 'diem' (day) and acts as an important regulator of a wide array of physiological functions including metabolism, sleep, body temperature, blood pressure, endocrine, immune, cardiovascular, and renal function. Consists of two major components: the central clock, residing in the suprachiasmatic nucleus (SCN) of the brain, and the peripheral clocks that are present in nearly every tissue and organ system. Both the central and peripheral clocks can be reset by environmental cues, also known as Zeitgebers (German for 'timegivers'). The predominant Zeitgeber for the central clock is light, which is sensed by retina and signals directly to the SCN. The central clock entrains the peripheral clocks through neuronal and hormonal signals, body temperature and feeding-related cues, aligning all clocks with the external light/dark cycle. Circadian rhythms allow an organism to achieve temporal homeostasis with its environment at the molecular level by regulating gene expression to create a peak of protein expression once every 24 hours to control when a particular physiological process is most active with respect to the solar day. Transcription and translation of core clock components (CLOCK, NPAS2, BMAL1, BMAL2, PER1, PER2, PER3, CRY1 and CRY2) plays a critical role in rhythm generation, whereas delays imposed by post-translational modifications (PTMs) are important for determining the period (tau) of the rhythms (tau refers to the period of a rhythm and is the length, in time, of one complete cycle). A diurnal rhythm is synchronized with the day/night cycle, while the ultradian and infradian rhythms have a period shorter and longer than 24 hours, respectively. Disruptions in the circadian rhythms contribute to the pathology of cardiovascular diseases, cancer, metabolic syndromes and aging. A transcription/translation feedback loop (TTFL) forms the core of the molecular circadian clock mechanism. Transcription factors, CLOCK or NPAS2 and BMAL1 or BMAL2, form the positive limb of the feedback loop, act in the form of a heterodimer and activate the transcription of core clock genes and clock-controlled genes (involved in key metabolic processes), harboring E-box elements (5'-CACGTG-3') within their promoters. The core clock genes: PER1/2/3 and CRY1/2 which are transcriptional repressors form the negative limb of the feedback loop and interact with the CLOCK|NPAS2-BMAL1|BMAL2 heterodimer inhibiting its activity and thereby negatively regulating their own expression. This heterodimer also activates nuclear receptors NR1D1/2 and RORA/B/G, which form a second feedback loop and which activate and repress BMAL1 transcription, respectively. CRY1 and CRY2 have redundant functions but also differential and selective contributions at least in defining the pace of the SCN circadian clock and its circadian transcriptional outputs. More potent transcriptional repressor in cerebellum and liver than CRY2, though more effective in lengthening the period of the SCN oscillator. On its side, CRY2 seems to play a critical role in tuning SCN circadian period by opposing the action of CRY1. With CRY2, is dispensable for circadian rhythm generation but necessary for the development of intercellular networks for rhythm synchrony. Capable of translocating circadian clock core proteins such as PER proteins to the nucleus. Interacts with CLOCK-BMAL1 independently of PER proteins and is found at CLOCK-BMAL1-bound sites, suggesting that CRY may act as a molecular gatekeeper to maintainCLOCK-BMAL1 in a poised and repressed state until the proper time for transcriptional activation. Represses the CLOCK-BMAL1 induced transcription of BHLHE40/DEC1, ATF4, MTA1, KLF10 and NAMPT. May repress circadian target genes expression in collaboration with HDAC1 and HDAC2 through histone deacetylation. Mediates the clock-control activation of ATR and modulates ATR-mediated DNA damage checkpoint. In liver, mediates circadian regulation of cAMP signaling and gluconeogenesis by binding to membrane-coupled G proteins and blocking glucagon-mediated increases in intracellular cAMP concentrations and CREB1 phosphorylation. Inhibits hepatic gluconeogenesis by decreasing nuclear FOXO1 levels that down-regulates gluconeogenic gene expression. Besides its role in the maintenance of the circadian clock, is also involved in the regulation of other processes. Represses glucocorticoid receptor NR3C1/GR-induced transcriptional activity by binding to glucocorticoid response elements (GREs). Plays a key role in glucose and lipid metabolism modulation, in part, through the transcriptional regulation of genes involved in these pathways, such as LEP or ACSL4. Represses PPARD and its target genes in the skeletal muscle and limits exercise capacity. Plays an essential role in the generation of circadian rhythms in the retina. Represses the transcriptional activity of NR1I2. The polypeptide is Cryptochrome-1 (CRY1) (Macaca fascicularis (Crab-eating macaque)).